A 190-amino-acid polypeptide reads, in one-letter code: Ribonuclease HII (190 aa).

One can recognise an RNase H type-2 domain in the interval 3 to 190 (KLIAGVDEVG…KPVKALLEEK (188 aa)). Residues D9, E10, and D101 each coordinate a divalent metal cation.

This sequence belongs to the RNase HII family. Requires Mn(2+) as cofactor. The cofactor is Mg(2+).

It localises to the cytoplasm. The catalysed reaction is Endonucleolytic cleavage to 5'-phosphomonoester.. Its function is as follows. Endonuclease that specifically degrades the RNA of RNA-DNA hybrids. In Alteromonas mediterranea (strain DSM 17117 / CIP 110805 / LMG 28347 / Deep ecotype), this protein is Ribonuclease HII.